Here is a 937-residue protein sequence, read N- to C-terminus: Aconitate hydratase A (937 aa).

The tract at residues 410 to 450 is disordered; that stretch reads MANEGGFQPGSTSDLDNYNASWPGEGESAAANAEGRPSNPV. Polar residues predominate over residues 418–429; that stretch reads PGSTSDLDNYNA. The span at 433-444 shows a compositional bias: low complexity; it reads GEGESAAANAEG. [4Fe-4S] cluster is bound by residues cysteine 475, cysteine 541, and cysteine 544.

This sequence belongs to the aconitase/IPM isomerase family. As to quaternary structure, monomer. [4Fe-4S] cluster is required as a cofactor.

It catalyses the reaction citrate = D-threo-isocitrate. The catalysed reaction is (2S,3R)-3-hydroxybutane-1,2,3-tricarboxylate = 2-methyl-cis-aconitate + H2O. Its pathway is carbohydrate metabolism; tricarboxylic acid cycle; isocitrate from oxaloacetate: step 2/2. It functions in the pathway organic acid metabolism; propanoate degradation. Functionally, involved in the catabolism of short chain fatty acids (SCFA) via the tricarboxylic acid (TCA)(acetyl degradation route) and probably via the 2-methylcitrate cycle I (propionate degradation route). Catalyzes the reversible isomerization of citrate to isocitrate via cis-aconitate. Could catalyze the hydration of 2-methyl-cis-aconitate to yield (2R,3S)-2-methylisocitrate. The apo form of AcnA functions as a RNA-binding regulatory protein. This Corynebacterium efficiens (strain DSM 44549 / YS-314 / AJ 12310 / JCM 11189 / NBRC 100395) protein is Aconitate hydratase A (acn).